A 278-amino-acid chain; its full sequence is MTQMNFTDRATRVAIIANGKYQSKRVASKLFAAFKHDPDFYLSKKDPDIVISIGGDGMLLSAFHMYEKQLDKVRFVGVHTGHLGFYTDYRDFEVDTLINNLKNDEGEQISYPILKVTITLEDGRVIRARALNESTIKRIEKTMVADVVINQVVFERFRGDGILVSTPTGSTAYNKSLGGAVLHPTIEALQLTEISSLNNRVYRTLGSSVIIPKKDAIEIVPKRVGVYTISIDNKTVHYKNVTKIEYSIDEKSINFVSTPSHTSFWERVNDAFIGEPEH.

Residue Asp56 is the Proton acceptor of the active site. NAD(+) contacts are provided by residues 56–57 (DG), 132–133 (NE), Arg158, Asp160, and 171–176 (TAYNKS).

It belongs to the NAD kinase family. It depends on a divalent metal cation as a cofactor.

It is found in the cytoplasm. The catalysed reaction is NAD(+) + ATP = ADP + NADP(+) + H(+). In terms of biological role, involved in the regulation of the intracellular balance of NAD and NADP, and is a key enzyme in the biosynthesis of NADP. Catalyzes specifically the phosphorylation on 2'-hydroxyl of the adenosine moiety of NAD to yield NADP. This is NAD kinase from Streptococcus agalactiae serotype III (strain NEM316).